The chain runs to 349 residues: Twinfilin-2-B (349 aa).

2 consecutive ADF-H domains span residues 4–139 and 177–313; these read QTGI…KHVS and GLSF…DEVH. The tract at residues 321–349 is disordered; sequence QAFAKPKGPAGKRGQKRLIKGPGENGEDS.

Belongs to the actin-binding proteins ADF family. Twinfilin subfamily. In terms of assembly, interacts with G-actin; ADP-actin form and capping protein (CP).

It is found in the cytoplasm. The protein localises to the cytoskeleton. It localises to the perinuclear region. Its function is as follows. Actin-binding protein involved in motile and morphological processes. Inhibits actin polymerization, likely by sequestering G-actin. This is Twinfilin-2-B (twf2-b) from Xenopus laevis (African clawed frog).